The following is a 333-amino-acid chain: Dehydrodolichyl diphosphate synthase complex subunit DHDDS (333 aa).

(2E,6E)-farnesyl diphosphate contacts are provided by aspartate 34, glycine 35, arginine 37, arginine 38, and arginine 85. Positions 34, 35, 37, 38, 85, 205, 211, and 213 each coordinate isopentenyl diphosphate. Aspartate 34 serves as a coordination point for Mg(2+).

Belongs to the UPP synthase family. In terms of assembly, the active dehydrodolichyl diphosphate synthase complex is a heterotetramer composed of a dimer of heterodimer of DHDDS and NUS1. Interacts with NPC2. It depends on Mg(2+) as a cofactor. In terms of tissue distribution, ubiquitous. Expressed at high levels in testis and kidney. Expressed in epididymis (at protein level).

It is found in the endoplasmic reticulum membrane. It carries out the reaction n isopentenyl diphosphate + (2E,6E)-farnesyl diphosphate = a di-trans,poly-cis-polyprenyl diphosphate + n diphosphate. The protein operates within protein modification; protein glycosylation. Its pathway is lipid metabolism. Its activity is regulated as follows. Activated by phospholipids including cardiolipin, phosphatidylcholine, phosphatidylethanolamine, phosphatidylinositol and phosphatidylserine. In terms of biological role, with NUS1, forms the dehydrodolichyl diphosphate synthase (DDS) complex, an essential component of the dolichol monophosphate (Dol-P) biosynthetic machinery. Both subunits contribute to enzymatic activity, i.e. condensation of multiple copies of isopentenyl pyrophosphate (IPP) to farnesyl pyrophosphate (FPP) to produce dehydrodolichyl diphosphate (Dedol-PP), a precursor of dolichol phosphate which is utilized as a sugar carrier in protein glycosylation in the endoplasmic reticulum (ER). Synthesizes long-chain polyprenols, mostly of C95 and C100 chain length. Regulates the glycosylation and stability of nascent NPC2, thereby promoting trafficking of LDL-derived cholesterol. In Homo sapiens (Human), this protein is Dehydrodolichyl diphosphate synthase complex subunit DHDDS.